The sequence spans 320 residues: Olfactory receptor 13C8 (320 aa).

The Extracellular segment spans residues 1 to 25 (MERTNDSTSTEFFLVGLSAHPKLQT). An N-linked (GlcNAc...) asparagine glycan is attached at asparagine 5. Residues 26-46 (VFFVLILWMYLMILLGNGVLI) traverse the membrane as a helical segment. Residues 47–54 (SVIIFDSH) lie on the Cytoplasmic side of the membrane. A helical membrane pass occupies residues 55–75 (LHTPMYFFLCNLSFLDVCYTS). Residues 76–99 (SSVPLILASFLAVKKKVSFSGCMV) are Extracellular-facing. An intrachain disulfide couples cysteine 97 to cysteine 189. The helical transmembrane segment at 100 to 120 (QMFISFAMGATECMILGTMAL) threads the bilayer. Residues 121-139 (DRYVAICYPLRYPVIMSKG) lie on the Cytoplasmic side of the membrane. Residues 140-160 (AYVAMAAGSWVTGLVDSVVQT) form a helical membrane-spanning segment. Topologically, residues 161–197 (AFAMQLPFCANNVIKHFVCEILAILKLACADISINVI) are extracellular. The helical transmembrane segment at 198–217 (SMTGSNLIVLVIPLLVISIS) threads the bilayer. Residues 218–237 (YIFIVATILRIPSTEGKHKA) lie on the Cytoplasmic side of the membrane. Residues 238 to 258 (FSTCSAHLTVVIIFYGTIFFM) form a helical membrane-spanning segment. Topologically, residues 259–277 (YAKPESKASVDSGNEDIIE) are extracellular. A helical membrane pass occupies residues 278-298 (ALISLFYGVMTPMLNPLIYSL). At 299 to 320 (RNKDVKAAVKNILCRKNFSDGK) the chain is on the cytoplasmic side.

The protein belongs to the G-protein coupled receptor 1 family.

Its subcellular location is the cell membrane. Odorant receptor. The polypeptide is Olfactory receptor 13C8 (OR13C8) (Homo sapiens (Human)).